A 453-amino-acid polypeptide reads, in one-letter code: Succinate-semialdehyde dehydrogenase (acetylating) (453 aa).

Residue 188–193 (ATGGAG) participates in NADP(+) binding. Residue C242 is part of the active site.

As to quaternary structure, homodimer.

It catalyses the reaction succinate semialdehyde + NADP(+) + CoA = succinyl-CoA + NADPH + H(+). Its function is as follows. Catalyzes the reduction of succinate semialdehyde to succinyl-CoA. The enzyme is specific for succinate semialdehyde and succinyl-CoA, and only shows low activity with palmitoyl-CoA. There is no activity with NAD(+) as cosubstrate. The protein is Succinate-semialdehyde dehydrogenase (acetylating) (sucD) of Clostridium kluyveri (strain ATCC 8527 / DSM 555 / NBRC 12016 / NCIMB 10680 / K1).